Reading from the N-terminus, the 60-residue chain is Large ribosomal subunit protein uL30 (60 aa).

It belongs to the universal ribosomal protein uL30 family. As to quaternary structure, part of the 50S ribosomal subunit.

The polypeptide is Large ribosomal subunit protein uL30 (Mycobacteroides abscessus (strain ATCC 19977 / DSM 44196 / CCUG 20993 / CIP 104536 / JCM 13569 / NCTC 13031 / TMC 1543 / L948) (Mycobacterium abscessus)).